The chain runs to 163 residues: 2-amino-4-hydroxy-6-hydroxymethyldihydropteridine pyrophosphokinase (163 aa).

This sequence belongs to the HPPK family.

It carries out the reaction 6-hydroxymethyl-7,8-dihydropterin + ATP = (7,8-dihydropterin-6-yl)methyl diphosphate + AMP + H(+). Its pathway is cofactor biosynthesis; tetrahydrofolate biosynthesis; 2-amino-4-hydroxy-6-hydroxymethyl-7,8-dihydropteridine diphosphate from 7,8-dihydroneopterin triphosphate: step 4/4. Catalyzes the transfer of pyrophosphate from adenosine triphosphate (ATP) to 6-hydroxymethyl-7,8-dihydropterin, an enzymatic step in folate biosynthesis pathway. In Helicobacter pylori (strain ATCC 700392 / 26695) (Campylobacter pylori), this protein is 2-amino-4-hydroxy-6-hydroxymethyldihydropteridine pyrophosphokinase (folK).